Reading from the N-terminus, the 463-residue chain is L-seryl-tRNA(Sec) selenium transferase (463 aa).

N6-(pyridoxal phosphate)lysine is present on lysine 295.

It belongs to the SelA family. Homodecamer; pentamer of dimers. Binds only one seryl-tRNA(Sec) per dimer. It depends on pyridoxal 5'-phosphate as a cofactor.

The protein resides in the cytoplasm. It carries out the reaction L-seryl-tRNA(Sec) + selenophosphate + H(+) = L-selenocysteinyl-tRNA(Sec) + phosphate. It functions in the pathway aminoacyl-tRNA biosynthesis; selenocysteinyl-tRNA(Sec) biosynthesis; selenocysteinyl-tRNA(Sec) from L-seryl-tRNA(Sec) (bacterial route): step 1/1. In terms of biological role, converts seryl-tRNA(Sec) to selenocysteinyl-tRNA(Sec) required for selenoprotein biosynthesis. In Escherichia coli O45:K1 (strain S88 / ExPEC), this protein is L-seryl-tRNA(Sec) selenium transferase.